The chain runs to 298 residues: Transcription factor bHLH114 (298 aa).

A coiled-coil region spans residues 117 to 149; it reads LDHEIRNHKSSKEQITQDYKNLTSKRSEELEEN. The tract at residues 126–154 is disordered; the sequence is SSKEQITQDYKNLTSKRSEELEENSDEYS. Residues 129–140 show a composition bias toward polar residues; the sequence is EQITQDYKNLTS. In terms of domain architecture, bHLH spans 163-212; sequence LETLSPLPSFKVRKEKLGDRITALQQLVSPFGKTDTASVLNEAVEYIKFL.

As to quaternary structure, homodimer. As to expression, differentiating root endodermis.

It is found in the nucleus. This chain is Transcription factor bHLH114 (BHLH114), found in Arabidopsis thaliana (Mouse-ear cress).